A 215-amino-acid chain; its full sequence is Protein Nef (215 aa).

Glycine 2 carries N-myristoyl glycine; by host lipidation. At serine 6 the chain carries Phosphoserine; by host. Residues 71-74 form an acidic; interacts with host PACS1 and PACS2; stabilizes the interaction of NEF/MHC-I with host AP1M1; necessary for MHC-I internalization region; it reads EEEE. Positions 78-87 are SH3-binding; interaction with Src family tyrosine kinases; the sequence is PVRPQVPLRP. Residues 81–84 carry the PxxP; stabilizes the interaction of NEF/MHC-I with host AP1M1; necessary for MHC-I internalization motif; the sequence is PQVP. Positions 117–133 are mediates dimerization, Nef-PTE1 interaction; sequence EILDLWVYHTQGFFPDW. The tract at residues 157 to 189 is binding to ATP6V1H; the sequence is VDPAEVEETTEGEDNCLLHPINQHGMEDEHREI. Residues 173 to 174 carry the Dileucine internalization motif; necessary for CD4 internalization motif; sequence LL. Residues 183–184 carry the Diacidic; necessary for CD4 internalization motif; the sequence is ED.

Belongs to the lentivirus primate group Nef protein family. As to quaternary structure, monomer; cytosolic form. Homodimer; membrane bound form. Interacts with Nef associated p21-activated kinase (PAK2); this interaction activates PAK2. Associates with the Nef-MHC-I-AP1 complex; this complex is required for MHC-I internalization. Interacts (via C-terminus) with host PI3-kinase. Interacts with host PACS1; this interaction seems to be weak. Interacts with host PACS2. Interacts with host LCK and MAPK3; these interactions inhibit the kinase activity of the latter. Interacts with host ATP6V1H; this interaction may play a role in CD4 endocytosis. Associates with the CD4-Nef-AP2 complex; this complex is required for CD4 internalization. Interacts with host AP2 subunit alpha and AP2 subunit sigma2. Interacts with TCR-zeta chain; this interaction up-regulates the Fas ligand (FasL) surface expression. Interacts with host HCK, LYN, and SRC; these interactions activate the Src family kinases. Interacts with MAP3K5; this interaction inhibits the Fas and TNFR-mediated death signals. Interacts with beta-COP and PTE1. Interacts with human RACK1; this increases Nef phosphorylation by PKC. Interacts with TP53; this interaction decreases the half-life of TP53, protecting the infected cell against p53-mediated apoptosis. The virion-associated Nef proteins are cleaved by the viral protease to release the soluble C-terminal core protein. Nef is probably cleaved concomitantly with viral structural proteins on maturation of virus particles. In terms of processing, myristoylated. Post-translationally, phosphorylated on serine residues, probably by host PKCdelta and theta.

The protein resides in the host cell membrane. It is found in the virion. It localises to the secreted. Its subcellular location is the host Golgi apparatus membrane. Its function is as follows. Factor of infectivity and pathogenicity, required for optimal virus replication. Alters numerous pathways of T-lymphocyte function and down-regulates immunity surface molecules in order to evade host defense and increase viral infectivity. Alters the functionality of other immunity cells, like dendritic cells, monocytes/macrophages and NK cells. In infected CD4(+) T-lymphocytes, down-regulates the surface MHC-I, mature MHC-II, CD4, CD28, CCR5 and CXCR4 molecules. Mediates internalization and degradation of host CD4 through the interaction of with the cytoplasmic tail of CD4, the recruitment of AP-2 (clathrin adapter protein complex 2), internalization through clathrin coated pits, and subsequent transport to endosomes and lysosomes for degradation. Diverts host MHC-I molecules to the trans-Golgi network-associated endosomal compartments by an endocytic pathway to finally target them for degradation. MHC-I down-regulation may involve AP-1 (clathrin adapter protein complex 1) or possibly Src family kinase-ZAP70/Syk-PI3K cascade recruited by PACS2. In consequence infected cells are masked for immune recognition by cytotoxic T-lymphocytes. Decreasing the number of immune receptors also prevents reinfection by more HIV particles (superinfection). Down-regulates host SERINC3 and SERINC5 thereby excluding these proteins from the viral particles. Virion infectivity is drastically higher when SERINC3 or SERINC5 are excluded from the viral envelope, because these host antiviral proteins impair the membrane fusion event necessary for subsequent virion penetration. In terms of biological role, bypasses host T-cell signaling by inducing a transcriptional program nearly identical to that of anti-CD3 cell activation. Interaction with TCR-zeta chain up-regulates the Fas ligand (FasL). Increasing surface FasL molecules and decreasing surface MHC-I molecules on infected CD4(+) cells send attacking cytotoxic CD8+ T-lymphocytes into apoptosis. Functionally, plays a role in optimizing the host cell environment for viral replication without causing cell death by apoptosis. Protects the infected cells from apoptosis in order to keep them alive until the next virus generation is ready to strike. Inhibits the Fas and TNFR-mediated death signals by blocking MAP3K5/ASK1. Decreases the half-life of TP53, protecting the infected cell against p53-mediated apoptosis. Inhibits the apoptotic signals regulated by the Bcl-2 family proteins through the formation of a Nef/PI3-kinase/PAK2 complex that leads to activation of PAK2 and induces phosphorylation of host BAD. Its function is as follows. Extracellular Nef protein targets CD4(+) T-lymphocytes for apoptosis by interacting with CXCR4 surface receptors. This is Protein Nef from Human immunodeficiency virus type 1 group M subtype K (isolate 96CM-MP535) (HIV-1).